The primary structure comprises 547 residues: Chaperonin GroEL (547 aa).

ATP is bound by residues 30–33 (TLGP), lysine 51, 87–91 (DGTTT), glycine 415, 479–481 (DAA), and aspartate 495.

It belongs to the chaperonin (HSP60) family. Forms a cylinder of 14 subunits composed of two heptameric rings stacked back-to-back. Interacts with the co-chaperonin GroES.

The protein resides in the cytoplasm. It catalyses the reaction ATP + H2O + a folded polypeptide = ADP + phosphate + an unfolded polypeptide.. Together with its co-chaperonin GroES, plays an essential role in assisting protein folding. The GroEL-GroES system forms a nano-cage that allows encapsulation of the non-native substrate proteins and provides a physical environment optimized to promote and accelerate protein folding. In Dichelobacter nodosus (strain VCS1703A), this protein is Chaperonin GroEL.